A 146-amino-acid polypeptide reads, in one-letter code: Peptide methionine sulfoxide reductase MsrB (146 aa).

The region spanning 6–129 (SAEAIAKLSA…NSASLRFVPK (124 aa)) is the MsrB domain. Cys-118 serves as the catalytic Nucleophile.

It belongs to the MsrB Met sulfoxide reductase family.

The catalysed reaction is L-methionyl-[protein] + [thioredoxin]-disulfide + H2O = L-methionyl-(R)-S-oxide-[protein] + [thioredoxin]-dithiol. In Brucella melitensis biotype 1 (strain ATCC 23456 / CCUG 17765 / NCTC 10094 / 16M), this protein is Peptide methionine sulfoxide reductase MsrB.